The following is a 78-amino-acid chain: Large ribosomal subunit protein bL28 (78 aa).

A disordered region spans residues 1–20 (MSRVCQVTGKRPVTGNNRSH).

It belongs to the bacterial ribosomal protein bL28 family.

In Vibrio atlanticus (strain LGP32) (Vibrio splendidus (strain Mel32)), this protein is Large ribosomal subunit protein bL28.